Reading from the N-terminus, the 841-residue chain is MSRLIVKGLPKYYTEEKLREFFSKQGDVTDVKLMKKRNGESRKFAFIGYKSADAAERAVKYFNKSFIDTARIEVEFAKTFSDPTVPLSFKEKRKREEQKLKDEQERLLEQELRAQAKKQKTKSTSEIDDEIASNPKLREYMEVMKPSHQVKSWANDTIADGSGGPSVQDLENALNGNNESPVDKSNIEVVNTVEDASDDEYNDFKELSNKHGENEDEEEEEEMMSLGDLPTNEENKDKNESGENLAANENISDLEWLKSRSTRIKENGEVPEIVPEVKEVNEVTEATQQSDNEPEMTPEEQIAHKIEETGRLFIRNISYEASEEDFRSLFSQYGALEEVHIAIDTRTGKSKGFLYVQFLKKEDATRAYRSLDKQIFQGRLLHILPADKKKDHRLDEFDLKNLPLKKQRELKKKAQAAKTQFSWNSLYMNSDAVLESVASKLGVTKSQLIDPENSSSAVKQALAEAHVIGDVRKYFEDRGVDLTSFDKKERDDKIILVKNFPFGTTIDEIGELFSAYGQLKRMLMPPAGTIAIIEFRDAPSARAAFSKLAYKRFKSSILYLEKGPKDLFTREPTTNEVATIPEQQQNEHAVEAKISANEILGESKEDDEIESVQGPTVAVFVKNLNFATTVQALSDLFKPLPGFVVATVKTKPDPKNSGKTLSMGFGFVEFRTKEQANVAISTLDGHVLDGHKLQLKLSHKQGTGTSASSIKKSGKSSKIIIKNLPFEATRKDLLELFGAFGQLKSVRVPKKFDQSARGFAFVEFNLMKEAETAMSQLEGVHLLGRRLVMQYAEQDAENAEVEIERMTKKVKKQVATQNLAAARLAGKGKIELEEKDEEDFD.

The RRM 1 domain maps to 2–79 (SRLIVKGLPK…ARIEVEFAKT (78 aa)). Positions 194–249 (EDASDDEYNDFKELSNKHGENEDEEEEEEMMSLGDLPTNEENKDKNESGENLAANE) are disordered. Residues 202-213 (NDFKELSNKHGE) show a composition bias toward basic and acidic residues. A compositionally biased stretch (acidic residues) spans 214–223 (NEDEEEEEEM). RRM domains are found at residues 310–388 (GRLF…PADK), 493–565 (KIIL…KGPK), 617–700 (VAVF…LSHK), and 717–794 (SKII…YAEQ).

This sequence belongs to the RRM MRD1 family.

It localises to the nucleus. Involved in pre-rRNA processing. This is Multiple RNA-binding domain-containing protein 1 (MRD1) from Candida albicans (strain SC5314 / ATCC MYA-2876) (Yeast).